Reading from the N-terminus, the 451-residue chain is MDCYTKYLAENVLSEDKVVTYRYLSRALRVHVNTAKQMLFEFHRSQNAKCPNTVHATYLVYGRKKADAEQPSALKNGDGDIEMTSSPPEAESISEAVPAYSLSLIPEDRLSDALADYDEVFSIHVYSIGPHPNKDVALLADAANATLNLESKGDVTQLRAIINPRARRREQQGAGLRAAAAAATVKSQAKSIFPKPPTAPSTSQVKEAPKASQTVEETAEKATLSAPAKKGSSAPKSAASSGGIMQAFSKAAAVSKAKKQTPALRSATPASVEESIPQPLSDDGEDDEDMPQPKPSRSSAMKTKKQREEELRRMMESDDEEEKKKKKEEEEEEEEEEEESEHEQLPAEEEPMAEEPKAPEPVKEEPAEIITATTNGRRRGKRKVLRKKQIMDEQGYLVTVTEPAWESFSEDEPPPPSKPKATSLAPATQATKPKKGGKGGQGSIMSWFAKK.

3 disordered regions span residues 187–241 (SQAK…AASS), 259–386 (KQTP…KVLR), and 404–451 (AWES…FAKK). Positions 200-216 (PSTSQVKEAPKASQTVE) are enriched in polar residues. The segment covering 225–241 (SAPAKKGSSAPKSAASS) has biased composition (low complexity). Residues 306 to 316 (QREEELRRMME) show a composition bias toward basic and acidic residues. Residues 329-353 (EEEEEEEEEEESEHEQLPAEEEPMA) are compositionally biased toward acidic residues. Over residues 354 to 366 (EEPKAPEPVKEEP) the composition is skewed to basic and acidic residues. The span at 376–386 (GRRRGKRKVLR) shows a compositional bias: basic residues. Positions 441-448 (QGSIMSWF) match the PIP-box motif.

As to quaternary structure, component of the DNA polymerase delta complex which consists of PolD1, PolD2, PolD3 and PolD4, with PolD1 bearing DNA polymerase and 3' to 5' proofreading exonuclease activities. Directly interacts with PCNA.

Its subcellular location is the nucleus. Functionally, accessory component of the DNA polymerase delta complex. The complex is required for the maintenance of genome integrity, acting in concert with the sliding clamp processivity factor PCNA. The sequence is that of DNA polymerase delta subunit 3 from Chaetomium thermophilum (strain DSM 1495 / CBS 144.50 / IMI 039719) (Thermochaetoides thermophila).